The primary structure comprises 437 residues: MSGSSMYKTKLCILFNKTGDCSRPNCTFAHGNAELRRPGESSFTGRRHNMDSDLRDRRHNMDSDLRDRLGRQFSPERRPSLDRSGRRVQRFSGHDNSMPFENRRDKDYRENRRFDERRDYAGGLKVGNRIEDRAEDGRNKFHGYNNVLEEQLKDVEMDVKMLTDDKLRLEASVERKAHEVDILTSRIQELETQLDREKDECRRITSSSKKFVKEYNRFLRAQDDLKRSEARLQKLGNQLSTYLAGSEGNNRDVGLDIVSDEETNGRNLRTACDPHNELQNTSSLSRKKHYVDQYTTKEPVEDGLIGRGEEEKVENEKKRPPCWNMLSSKSYSEEESGAWNDEDTINRSSSKEDNWKRRRFSIGTSATDKVILSTSMAAREFDDVAESEEENPEAANGSPLISLPPPPPFRDAHVQRDEDDVNGDVMEQKKAYDDDSV.

A C3H1-type zinc finger spans residues 6–33 (MYKTKLCILFNKTGDCSRPNCTFAHGNA). A disordered region spans residues 35-107 (LRRPGESSFT…MPFENRRDKD (73 aa)). Residues 48–85 (HNMDSDLRDRRHNMDSDLRDRLGRQFSPERRPSLDRSG) are compositionally biased toward basic and acidic residues. The stretch at 145–244 (NNVLEEQLKD…LGNQLSTYLA (100 aa)) forms a coiled coil. Residue Ser259 is modified to Phosphoserine. 2 disordered regions span residues 266 to 360 (RNLR…RRRF) and 380 to 437 (EFDD…DDSV). Residues 307–319 (RGEEEKVENEKKR) are compositionally biased toward basic and acidic residues. 2 stretches are compositionally biased toward acidic residues: residues 333–343 (EEESGAWNDED) and 383–392 (DVAESEEENP). Positions 426–437 (MEQKKAYDDDSV) are enriched in basic and acidic residues.

The polypeptide is Zinc finger CCCH domain-containing protein 40 (Arabidopsis thaliana (Mouse-ear cress)).